We begin with the raw amino-acid sequence, 438 residues long: MENDMETATMTQDYHIANINLADWGRKEIEIAETEMPGLMALRKKYKNAKPLKGARIAGCIHMTIQTAVLIETLMLLGAEVRWSSCNIFSTQDHAAAALAQKGIPIFAWKGETEEEYWRCIASTLEGPKGWTPNLLLDDGGDLTAHTLQKHPELCQNIRGVSEETTTGVHRLYRMLKEGSLKFPAINVNDSVTKSKFDNLYGCRESLIDSIKRATDVMIAGKRVVVCGYGDVGKGCAQSLRAYGATVYITEIDPICALQAAMEGYRVVTMDEMADSADIFVTATGNTDIITHEHMLKMKDQAIVCNIGHFDNEIDIASLQDYQWMNIKPQVDQVIFPDGKRLTVLAQGRLVNLGCATGHPSFVMSNSFTNQVLAQIELWQYPEKYPIGVYVLPKHLDEEVARLHLERVGAKLTTLTEKQADYIGVDPEGPFKSEHYRY.

Substrate-binding residues include Thr64, Asp139, and Glu164. An NAD(+)-binding site is contributed by 165 to 167 (TTT). Lys194 and Asp198 together coordinate substrate. Residues Asn199, 228–233 (GYGDVG), Glu251, Asn286, 307–309 (IGH), and Asn352 contribute to the NAD(+) site.

It belongs to the adenosylhomocysteinase family. Requires NAD(+) as cofactor.

Its subcellular location is the cytoplasm. The catalysed reaction is S-adenosyl-L-homocysteine + H2O = L-homocysteine + adenosine. It functions in the pathway amino-acid biosynthesis; L-homocysteine biosynthesis; L-homocysteine from S-adenosyl-L-homocysteine: step 1/1. May play a key role in the regulation of the intracellular concentration of adenosylhomocysteine. The protein is Adenosylhomocysteinase of Coxiella burnetii (strain Dugway 5J108-111).